Consider the following 298-residue polypeptide: ATP synthase gamma chain (298 aa).

It belongs to the ATPase gamma chain family. F-type ATPases have 2 components, CF(1) - the catalytic core - and CF(0) - the membrane proton channel. CF(1) has five subunits: alpha(3), beta(3), gamma(1), delta(1), epsilon(1). CF(0) has three main subunits: a, b and c.

The protein localises to the cell inner membrane. In terms of biological role, produces ATP from ADP in the presence of a proton gradient across the membrane. The gamma chain is believed to be important in regulating ATPase activity and the flow of protons through the CF(0) complex. The sequence is that of ATP synthase gamma chain from Bacteroides thetaiotaomicron (strain ATCC 29148 / DSM 2079 / JCM 5827 / CCUG 10774 / NCTC 10582 / VPI-5482 / E50).